The following is a 344-amino-acid chain: Inositol 2-dehydrogenase/D-chiro-inositol 3-dehydrogenase (344 aa).

The protein belongs to the Gfo/Idh/MocA family. In terms of assembly, homotetramer.

The enzyme catalyses myo-inositol + NAD(+) = scyllo-inosose + NADH + H(+). It catalyses the reaction 1D-chiro-inositol + NAD(+) = scyllo-inosine + NADH + H(+). The protein operates within polyol metabolism; myo-inositol degradation into acetyl-CoA; acetyl-CoA from myo-inositol: step 1/7. Its function is as follows. Involved in the oxidation of myo-inositol (MI) and D-chiro-inositol (DCI) to 2-keto-myo-inositol (2KMI or 2-inosose) and 1-keto-D-chiro-inositol (1KDCI), respectively. Can also use D-glucose and D-xylose, and shows a trace of activity with D-ribose and D-fructose. The polypeptide is Inositol 2-dehydrogenase/D-chiro-inositol 3-dehydrogenase (iolG) (Bacillus subtilis (strain 168)).